A 140-amino-acid polypeptide reads, in one-letter code: Probable prefoldin subunit 6 (140 aa).

The protein belongs to the prefoldin subunit beta family. As to quaternary structure, heterohexamer of two PFD-alpha type and four PFD-beta type subunits.

Functionally, binds specifically to cytosolic chaperonin (c-CPN) and transfers target proteins to it. Binds to nascent polypeptide chain and promotes folding in an environment in which there are many competing pathways for nonnative proteins. This chain is Probable prefoldin subunit 6 (pfdn6), found in Dictyostelium discoideum (Social amoeba).